The primary structure comprises 419 residues: MLYYLFNYLDQLDFPGAGMFKYVSFRSGLALILSLFISTAIGRRIIDKLQMLQIGETVRNLGLEGQMSKKGTPTMGGIIIIIAILIPTLLCAKLNNIYVILMLVTTVWLGALGFADDYIKVFKKNKEGMHGRFKIVGQVGLGLIVGLVLFMSPDVVIKENMEVRHDNVIEEVRYHTVETKSTKTTIPFLKNNNFDYANLVNWAGDYKEEAAWLVFVLMVIFVVTAVSNGANMTDGLDGLAAGTSAIIGVALGILAYMSSHFEFASFLNIMFIPGAEELVVYAAAFIGATVGFLWYNSYPAQVFMGDTGSLTLGGIIAVFAIIIRKELLIPILCGIFLVENISVMLQVAYFKYTKKKYGEGRRIFKMAPLHHHFQKPGNAGIQALIQKPFNVVPESKIVVRFWLIGIILAVMTIVTLKMR.

Transmembrane regions (helical) follow at residues 22–42 (YVSF…TAIG), 72–92 (TPTM…LLCA), 94–114 (LNNI…ALGF), 135–155 (IVGQ…SPDV), 210–230 (AAWL…SNGA), 238–258 (GLAA…AYMS), 266–286 (FLNI…AAFI), 303–323 (FMGD…AIII), 327–347 (LLIP…MLQV), and 396–416 (KIVV…IVTL).

The protein belongs to the glycosyltransferase 4 family. MraY subfamily. Requires Mg(2+) as cofactor.

It localises to the cell inner membrane. The catalysed reaction is UDP-N-acetyl-alpha-D-muramoyl-L-alanyl-gamma-D-glutamyl-meso-2,6-diaminopimeloyl-D-alanyl-D-alanine + di-trans,octa-cis-undecaprenyl phosphate = di-trans,octa-cis-undecaprenyl diphospho-N-acetyl-alpha-D-muramoyl-L-alanyl-D-glutamyl-meso-2,6-diaminopimeloyl-D-alanyl-D-alanine + UMP. The protein operates within cell wall biogenesis; peptidoglycan biosynthesis. Catalyzes the initial step of the lipid cycle reactions in the biosynthesis of the cell wall peptidoglycan: transfers peptidoglycan precursor phospho-MurNAc-pentapeptide from UDP-MurNAc-pentapeptide onto the lipid carrier undecaprenyl phosphate, yielding undecaprenyl-pyrophosphoryl-MurNAc-pentapeptide, known as lipid I. The protein is Phospho-N-acetylmuramoyl-pentapeptide-transferase of Parabacteroides distasonis (strain ATCC 8503 / DSM 20701 / CIP 104284 / JCM 5825 / NCTC 11152).